Consider the following 227-residue polypeptide: Orotidine 5'-phosphate decarboxylase (227 aa).

Residues aspartate 8, lysine 30, 59–68 (DLKLYDIPNT), threonine 118, arginine 178, glutamine 187, glycine 207, and arginine 208 each bind substrate. Residue lysine 61 is the Proton donor of the active site.

Belongs to the OMP decarboxylase family. Type 1 subfamily. In terms of assembly, homodimer.

The catalysed reaction is orotidine 5'-phosphate + H(+) = UMP + CO2. The protein operates within pyrimidine metabolism; UMP biosynthesis via de novo pathway; UMP from orotate: step 2/2. Its function is as follows. Catalyzes the decarboxylation of orotidine 5'-monophosphate (OMP) to uridine 5'-monophosphate (UMP). This is Orotidine 5'-phosphate decarboxylase from Nitratiruptor sp. (strain SB155-2).